The primary structure comprises 247 residues: Adenosylcobinamide-GDP ribazoletransferase (247 aa).

A run of 5 helical transmembrane segments spans residues 34–54, 59–79, 113–133, 138–158, and 194–214; these read IITF…VFMV, CGVP…TGGF, GGLA…ELAL, ILAS…LLMY, and VLLP…AIFI.

Belongs to the CobS family. Requires Mg(2+) as cofactor.

Its subcellular location is the cell inner membrane. It carries out the reaction alpha-ribazole + adenosylcob(III)inamide-GDP = adenosylcob(III)alamin + GMP + H(+). The enzyme catalyses alpha-ribazole 5'-phosphate + adenosylcob(III)inamide-GDP = adenosylcob(III)alamin 5'-phosphate + GMP + H(+). Its pathway is cofactor biosynthesis; adenosylcobalamin biosynthesis; adenosylcobalamin from cob(II)yrinate a,c-diamide: step 7/7. In terms of biological role, joins adenosylcobinamide-GDP and alpha-ribazole to generate adenosylcobalamin (Ado-cobalamin). Also synthesizes adenosylcobalamin 5'-phosphate from adenosylcobinamide-GDP and alpha-ribazole 5'-phosphate. This is Adenosylcobinamide-GDP ribazoletransferase from Escherichia coli O7:K1 (strain IAI39 / ExPEC).